A 534-amino-acid polypeptide reads, in one-letter code: CTP synthase (534 aa).

The segment at 1-265 is amidoligase domain; the sequence is MKYIVVTGGV…TTRLMKHLKL (265 aa). Position 12 (serine 12) interacts with CTP. Serine 12 is a UTP binding site. 13 to 18 serves as a coordination point for ATP; that stretch reads GLGKGI. Tyrosine 53 provides a ligand contact to L-glutamine. Residue aspartate 70 coordinates ATP. Residues aspartate 70 and glutamate 140 each contribute to the Mg(2+) site. Residues 147-149, 186-191, and lysine 222 contribute to the CTP site; these read DIE and KTKPSQ. UTP is bound by residues 186 to 191 and lysine 222; that span reads KTKPSQ. The 242-residue stretch at 289 to 530 folds into the Glutamine amidotransferase type-1 domain; that stretch reads KLAIVGKYTN…VRAMCKYNKE (242 aa). Residue glycine 352 participates in L-glutamine binding. Cysteine 379 (nucleophile; for glutamine hydrolysis) is an active-site residue. L-glutamine-binding positions include 380 to 383, glutamate 403, and arginine 460; that span reads LGMQ. Active-site residues include histidine 503 and glutamate 505.

The protein belongs to the CTP synthase family. Homotetramer.

It catalyses the reaction UTP + L-glutamine + ATP + H2O = CTP + L-glutamate + ADP + phosphate + 2 H(+). The enzyme catalyses L-glutamine + H2O = L-glutamate + NH4(+). The catalysed reaction is UTP + NH4(+) + ATP = CTP + ADP + phosphate + 2 H(+). Its pathway is pyrimidine metabolism; CTP biosynthesis via de novo pathway; CTP from UDP: step 2/2. With respect to regulation, allosterically activated by GTP, when glutamine is the substrate; GTP has no effect on the reaction when ammonia is the substrate. The allosteric effector GTP functions by stabilizing the protein conformation that binds the tetrahedral intermediate(s) formed during glutamine hydrolysis. Inhibited by the product CTP, via allosteric rather than competitive inhibition. Functionally, catalyzes the ATP-dependent amination of UTP to CTP with either L-glutamine or ammonia as the source of nitrogen. Regulates intracellular CTP levels through interactions with the four ribonucleotide triphosphates. The protein is CTP synthase of Methanosarcina acetivorans (strain ATCC 35395 / DSM 2834 / JCM 12185 / C2A).